The sequence spans 336 residues: Ribosomal RNA large subunit methyltransferase F (336 aa).

The protein belongs to the methyltransferase superfamily. METTL16/RlmF family.

The protein resides in the cytoplasm. It carries out the reaction adenosine(1618) in 23S rRNA + S-adenosyl-L-methionine = N(6)-methyladenosine(1618) in 23S rRNA + S-adenosyl-L-homocysteine + H(+). Its function is as follows. Specifically methylates the adenine in position 1618 of 23S rRNA. The chain is Ribosomal RNA large subunit methyltransferase F from Yersinia pestis (strain Pestoides F).